Here is a 145-residue protein sequence, read N- to C-terminus: uncharacterized protein (145 aa).

This sequence to R.meliloti R00649.

This is an uncharacterized protein from Agrobacterium fabrum (strain C58 / ATCC 33970) (Agrobacterium tumefaciens (strain C58)).